Reading from the N-terminus, the 469-residue chain is Cold shock protein CS66 (469 aa).

Tandem repeats lie at residues 9-31 (GEKK…DHKE), 49-62 (TGGA…TGTT), 72-94 (GEKK…DHQQ), 95-108 (TGGT…TGTA), 115-128 (TGGT…TGTA), 135-148 (TNGT…TGTA), 149-162 (TGGS…TGVT), 170-192 (GEKK…DNQQ), 193-206 (TAGT…FATG), 213-226 (TGGT…AGVT), 234-256 (GEKK…DHQQ), 257-270 (TGGT…TGAA), 277-290 (GGGT…TGMT), 298-320 (GGKK…DNQQ), 321-334 (TGGA…TGAA), 341-354 (SGGT…TGMT), 362-384 (GEKK…DHQQ), 385-398 (TGGA…TGTA), 405-418 (GGGT…TGMT), 428-441 (TGGT…TGTT), and 452-469 (GEKK…PGQH). The 7 X 23 AA approximate repeats stretch occupies residues 9-390 (GEKKGIMEKI…DHQQTGGAYG (382 aa)). Residues 49-441 (TGGAYGQEGH…HGQHGHTGTT (393 aa)) form a 14 X 14 AA approximate repeats region. The interval 87–112 (GGHADHQQTGGTYGQQGHTGTATHGT) is disordered. Over residues 93 to 112 (QQTGGTYGQQGHTGTATHGT) the composition is skewed to low complexity. Residues 203 to 214 (FATGTHGTPATG) are compositionally biased toward low complexity. The disordered stretch occupies residues 203-469 (FATGTHGTPA…KIKDKLPGQH (267 aa)). The span at 233 to 254 (TGEKKGLMENIKDKLPGGHGDH) shows a compositional bias: basic and acidic residues. Positions 255 to 274 (QQTGGTYGQQGHTGAATHGT) are enriched in low complexity. Gly residues predominate over residues 288–301 (GMTGTGTHGTGGKK). Basic and acidic residues predominate over residues 302 to 312 (GVMENIKDKLP). Positions 361–382 (TGEKKAVMENIKDKLPGGHGDH) are enriched in basic and acidic residues. Low complexity-rich tracts occupy residues 383–402 (QQTG…THGT) and 412–429 (HGNT…TATG). Gly residues predominate over residues 439–450 (GTTGTGTHGTDG). Over residues 451-469 (VGEKKSLMDKIKDKLPGQH) the composition is skewed to basic and acidic residues.

It belongs to the plant dehydrin family.

In terms of biological role, may reduce intracellular freezing damage during winter by hydrogen-bonding to the lattice of the nascent ice crystals, thus modifying the structure and/or propagation of ice crystals. This chain is Cold shock protein CS66 (CS66), found in Triticum aestivum (Wheat).